The chain runs to 141 residues: Alpha-lactalbumin (141 aa).

A signal peptide spans 1-19; that stretch reads MMSFVSLLVVGILFPAIQA. Residues 20 to 141 enclose the C-type lysozyme domain; that stretch reads KQFTKCELSQ…KLDQWLCEKM (122 aa). Disulfide bonds link Cys25/Cys138, Cys47/Cys129, Cys80/Cys95, and Cys91/Cys109. Ca(2+) is bound by residues Lys97, Asp100, Asp102, Asp105, and Asp106.

The protein belongs to the glycosyl hydrolase 22 family. In terms of assembly, lactose synthase (LS) is a heterodimer of a catalytic component, beta1,4-galactosyltransferase (beta4Gal-T1) and a regulatory component, alpha-lactalbumin (LA). In terms of tissue distribution, mammary gland specific. Secreted in milk.

It localises to the secreted. Its function is as follows. Regulatory subunit of lactose synthase, changes the substrate specificity of galactosyltransferase in the mammary gland making glucose a good acceptor substrate for this enzyme. This enables LS to synthesize lactose, the major carbohydrate component of milk. In other tissues, galactosyltransferase transfers galactose onto the N-acetylglucosamine of the oligosaccharide chains in glycoproteins. This is Alpha-lactalbumin (LALBA) from Sus scrofa (Pig).